The chain runs to 204 residues: Leucyl/phenylalanyl-tRNA--protein transferase (204 aa).

It belongs to the L/F-transferase family.

Its subcellular location is the cytoplasm. It carries out the reaction N-terminal L-lysyl-[protein] + L-leucyl-tRNA(Leu) = N-terminal L-leucyl-L-lysyl-[protein] + tRNA(Leu) + H(+). The catalysed reaction is N-terminal L-arginyl-[protein] + L-leucyl-tRNA(Leu) = N-terminal L-leucyl-L-arginyl-[protein] + tRNA(Leu) + H(+). It catalyses the reaction L-phenylalanyl-tRNA(Phe) + an N-terminal L-alpha-aminoacyl-[protein] = an N-terminal L-phenylalanyl-L-alpha-aminoacyl-[protein] + tRNA(Phe). Functions in the N-end rule pathway of protein degradation where it conjugates Leu, Phe and, less efficiently, Met from aminoacyl-tRNAs to the N-termini of proteins containing an N-terminal arginine or lysine. This is Leucyl/phenylalanyl-tRNA--protein transferase from Sinorhizobium fredii (strain NBRC 101917 / NGR234).